The primary structure comprises 382 residues: Putative glutamate--cysteine ligase 2-1 (382 aa).

The protein belongs to the glutamate--cysteine ligase type 2 family. YbdK subfamily.

It catalyses the reaction L-cysteine + L-glutamate + ATP = gamma-L-glutamyl-L-cysteine + ADP + phosphate + H(+). Functionally, ATP-dependent carboxylate-amine ligase which exhibits weak glutamate--cysteine ligase activity. The protein is Putative glutamate--cysteine ligase 2-1 of Frankia alni (strain DSM 45986 / CECT 9034 / ACN14a).